A 363-amino-acid polypeptide reads, in one-letter code: 3-dehydroquinate synthase (363 aa).

NAD(+) is bound by residues 107 to 111 (GVIGD), 131 to 132 (TT), lysine 144, and lysine 153. Positions 186, 251, and 268 each coordinate Zn(2+).

It belongs to the sugar phosphate cyclases superfamily. Dehydroquinate synthase family. Co(2+) serves as cofactor. It depends on Zn(2+) as a cofactor. NAD(+) is required as a cofactor.

Its subcellular location is the cytoplasm. It catalyses the reaction 7-phospho-2-dehydro-3-deoxy-D-arabino-heptonate = 3-dehydroquinate + phosphate. Its pathway is metabolic intermediate biosynthesis; chorismate biosynthesis; chorismate from D-erythrose 4-phosphate and phosphoenolpyruvate: step 2/7. Its function is as follows. Catalyzes the conversion of 3-deoxy-D-arabino-heptulosonate 7-phosphate (DAHP) to dehydroquinate (DHQ). This Nostoc punctiforme (strain ATCC 29133 / PCC 73102) protein is 3-dehydroquinate synthase.